A 351-amino-acid polypeptide reads, in one-letter code: Photosystem II D2 protein (351 aa).

The helical transmembrane segment at 39–59 (CAFLALGGWLTGTTFVTSWYT) threads the bilayer. Chlorophyll a is bound at residue His116. Residues 123-139 (GFMLRQFEIARLVGIRP) form a helical membrane-spanning segment. Pheophytin a is bound by residues Gln128 and Asn141. Residues 151-164 (VFVSVFLMYPLGQS) form a helical membrane-spanning segment. A chlorophyll a-binding site is contributed by His196. Residues 206 to 226 (GALLCAIHGATVENTLFEDGD) form a helical membrane-spanning segment. A plastoquinone is bound by residues His213 and Phe260. Residue His213 coordinates Fe cation. His267 provides a ligand contact to Fe cation. A helical membrane pass occupies residues 277–293 (GLWMSAVGIVGLALNLR).

Belongs to the reaction center PufL/M/PsbA/D family. In terms of assembly, PSII is composed of 1 copy each of membrane proteins PsbA, PsbB, PsbC, PsbD, PsbE, PsbF, PsbH, PsbI, PsbJ, PsbK, PsbL, PsbM, PsbT, PsbX, PsbY, PsbZ, Psb30/Ycf12, peripheral proteins PsbO, CyanoQ (PsbQ), PsbU, PsbV and a large number of cofactors. It forms dimeric complexes. Requires The D1/D2 heterodimer binds P680, chlorophylls that are the primary electron donor of PSII, and subsequent electron acceptors. It shares a non-heme iron and each subunit binds pheophytin, quinone, additional chlorophylls, carotenoids and lipids. There is also a Cl(-1) ion associated with D1 and D2, which is required for oxygen evolution. The PSII complex binds additional chlorophylls, carotenoids and specific lipids. as cofactor.

The protein resides in the cellular thylakoid membrane. The catalysed reaction is 2 a plastoquinone + 4 hnu + 2 H2O = 2 a plastoquinol + O2. Its function is as follows. Photosystem II (PSII) is a light-driven water:plastoquinone oxidoreductase that uses light energy to abstract electrons from H(2)O, generating O(2) and a proton gradient subsequently used for ATP formation. It consists of a core antenna complex that captures photons, and an electron transfer chain that converts photonic excitation into a charge separation. The D1/D2 (PsbA/PsbD) reaction center heterodimer binds P680, the primary electron donor of PSII as well as several subsequent electron acceptors. D2 is needed for assembly of a stable PSII complex. This is Photosystem II D2 protein from Nostoc punctiforme (strain ATCC 29133 / PCC 73102).